Consider the following 411-residue polypeptide: C6 finger domain transcription factor hasA (411 aa).

Residues 1-17 (MTSTLPYLTSPPATHPS) are compositionally biased toward polar residues. Residues 1-21 (MTSTLPYLTSPPATHPSNSDH) are disordered. Positions 28 to 54 (CDSCHQCKVKCSGGSPCFRCTSKGLNC) form a DNA-binding region, zn(2)-C6 fungal-type.

It localises to the nucleus. Functionally, transcription factor; part of the gene cluster that mediates the biosynthesis of hexadehydro-astechrome (HAS), a tryptophan-derived iron(III)-complex that acts as a virulence factor in infected mice. Positively regulates the expression of the HAS biosynthetic genes. This Aspergillus fumigatus (strain CBS 144.89 / FGSC A1163 / CEA10) (Neosartorya fumigata) protein is C6 finger domain transcription factor hasA.